The chain runs to 182 residues: MSSAAQPMSRRARRRAARRALGSQPGTSGGMVIPVSFVVSGATSADFVTYHSLYSRLAAYNGDLWIRRVAVRVTGSVAKRMGKYAFFEGLAVDKSQILSAAHARPYVYGLPSTLSLPGGRRQVKDFQSINLFFLLDGTAHAGEFAAGTFYFEFEGSPNVDFPRDSEGSNQAVEKFYLEHINA.

Positions 1-25 are disordered; sequence MSSAAQPMSRRARRRAARRALGSQP.

Its subcellular location is the virion. Capsid protein self-assembles to form a quasi-spherical capsid, about 26 nm, or bacilliform. The sequence is that of Capsid protein from Olive latent virus 2 (isolate Italy) (OLV-2).